A 154-amino-acid polypeptide reads, in one-letter code: Small ribosomal subunit protein uS7 (154 aa).

It belongs to the universal ribosomal protein uS7 family.

This Nicotiana plumbaginifolia (Leadwort-leaved tobacco) protein is Small ribosomal subunit protein uS7 (RPS5).